Reading from the N-terminus, the 192-residue chain is Thymidine kinase (192 aa).

Residues 9–16 (SAMNAGKT) and 88–91 (DECH) each bind ATP. The Proton acceptor role is filled by Glu-89. Zn(2+) contacts are provided by Cys-146, Cys-148, Cys-183, and His-186.

The protein belongs to the thymidine kinase family. In terms of assembly, homotetramer.

It localises to the cytoplasm. It catalyses the reaction thymidine + ATP = dTMP + ADP + H(+). This is Thymidine kinase from Blochmanniella floridana.